Here is a 295-residue protein sequence, read N- to C-terminus: 4-diphosphocytidyl-2-C-methyl-D-erythritol kinase (295 aa).

The active site involves lysine 22. 106–116 serves as a coordination point for ATP; the sequence is PAGGGFGGGSS. Residue aspartate 148 is part of the active site.

Belongs to the GHMP kinase family. IspE subfamily.

The enzyme catalyses 4-CDP-2-C-methyl-D-erythritol + ATP = 4-CDP-2-C-methyl-D-erythritol 2-phosphate + ADP + H(+). Its pathway is isoprenoid biosynthesis; isopentenyl diphosphate biosynthesis via DXP pathway; isopentenyl diphosphate from 1-deoxy-D-xylulose 5-phosphate: step 3/6. Functionally, catalyzes the phosphorylation of the position 2 hydroxy group of 4-diphosphocytidyl-2C-methyl-D-erythritol. The chain is 4-diphosphocytidyl-2-C-methyl-D-erythritol kinase from Xanthomonas oryzae pv. oryzae (strain MAFF 311018).